The sequence spans 123 residues: Large ribosomal subunit protein uL14 (123 aa).

It belongs to the universal ribosomal protein uL14 family. Part of the 50S ribosomal subunit. Forms a cluster with proteins L3 and L19. In the 70S ribosome, L14 and L19 interact and together make contacts with the 16S rRNA in bridges B5 and B8.

Its function is as follows. Binds to 23S rRNA. Forms part of two intersubunit bridges in the 70S ribosome. The sequence is that of Large ribosomal subunit protein uL14 from Blochmanniella pennsylvanica (strain BPEN).